Reading from the N-terminus, the 86-residue chain is Small ribosomal subunit protein uS15 (86 aa).

This sequence belongs to the universal ribosomal protein uS15 family. As to quaternary structure, part of the 30S ribosomal subunit. Forms a bridge to the 50S subunit in the 70S ribosome, contacting the 23S rRNA.

Functionally, one of the primary rRNA binding proteins, it binds directly to 16S rRNA where it helps nucleate assembly of the platform of the 30S subunit by binding and bridging several RNA helices of the 16S rRNA. In terms of biological role, forms an intersubunit bridge (bridge B4) with the 23S rRNA of the 50S subunit in the ribosome. This Ruthia magnifica subsp. Calyptogena magnifica protein is Small ribosomal subunit protein uS15.